Here is an 897-residue protein sequence, read N- to C-terminus: Translation initiation factor IF-2 (897 aa).

The tr-type G domain occupies Asn-402–Glu-570. Positions Gly-411–Thr-418 are G1. Gly-411–Thr-418 contributes to the GTP binding site. Positions Gly-436–Asn-440 are G2. The segment at Asp-458–Gly-461 is G3. Residues Asp-458–His-462 and Asn-512–Asp-515 each bind GTP. Positions Asn-512 to Asp-515 are G4. A G5 region spans residues Ser-548–Val-550.

The protein belongs to the TRAFAC class translation factor GTPase superfamily. Classic translation factor GTPase family. IF-2 subfamily.

It is found in the cytoplasm. In terms of biological role, one of the essential components for the initiation of protein synthesis. Protects formylmethionyl-tRNA from spontaneous hydrolysis and promotes its binding to the 30S ribosomal subunits. Also involved in the hydrolysis of GTP during the formation of the 70S ribosomal complex. This is Translation initiation factor IF-2 from Blochmanniella floridana.